The sequence spans 294 residues: Probable endonuclease 4 (294 aa).

Residues histidine 78, histidine 118, glutamate 157, aspartate 191, histidine 194, histidine 228, aspartate 241, histidine 243, and glutamate 273 each contribute to the Zn(2+) site.

Belongs to the AP endonuclease 2 family. Zn(2+) serves as cofactor.

It carries out the reaction Endonucleolytic cleavage to 5'-phosphooligonucleotide end-products.. Endonuclease IV plays a role in DNA repair. It cleaves phosphodiester bonds at apurinic or apyrimidinic (AP) sites, generating a 3'-hydroxyl group and a 5'-terminal sugar phosphate. The sequence is that of Probable endonuclease 4 from Streptomyces coelicolor (strain ATCC BAA-471 / A3(2) / M145).